We begin with the raw amino-acid sequence, 207 residues long: Small ribosomal subunit protein uS4c (207 aa).

The segment at 20-52 (GFSKKIDRNHTPPGQHGWKKKASDQKKSKESQY) is disordered. Residues 40–52 (KASDQKKSKESQY) show a composition bias toward basic and acidic residues. An S4 RNA-binding domain is found at 97–158 (MRLDNIIYRL…NSQQLIKNYL (62 aa)).

The protein belongs to the universal ribosomal protein uS4 family. Part of the 30S ribosomal subunit. Contacts protein S5. The interaction surface between S4 and S5 is involved in control of translational fidelity.

The protein resides in the plastid. Its function is as follows. One of the primary rRNA binding proteins, it binds directly to 16S rRNA where it nucleates assembly of the body of the 30S subunit. Functionally, with S5 and S12 plays an important role in translational accuracy. This chain is Small ribosomal subunit protein uS4c (rps4), found in Prototheca wickerhamii.